The chain runs to 540 residues: 2,3-bisphosphoglycerate-independent phosphoglycerate mutase (540 aa).

Mn(2+) contacts are provided by Asp24 and Ser74. Residue Ser74 is the Phosphoserine intermediate of the active site. Substrate-binding positions include His135, 165 to 166, Arg197, Arg203, 268 to 271, and Lys341; these read RD and RPDR. Mn(2+) contacts are provided by Asp408, His412, Asp449, His450, and His467.

Belongs to the BPG-independent phosphoglycerate mutase family. In terms of assembly, monomer. Mn(2+) is required as a cofactor.

It catalyses the reaction (2R)-2-phosphoglycerate = (2R)-3-phosphoglycerate. Its pathway is carbohydrate degradation; glycolysis; pyruvate from D-glyceraldehyde 3-phosphate: step 3/5. Catalyzes the interconversion of 2-phosphoglycerate and 3-phosphoglycerate. The sequence is that of 2,3-bisphosphoglycerate-independent phosphoglycerate mutase from Prochlorococcus marinus (strain MIT 9303).